Reading from the N-terminus, the 151-residue chain is Ribosome maturation factor RimP (151 aa).

This sequence belongs to the RimP family.

The protein resides in the cytoplasm. In terms of biological role, required for maturation of 30S ribosomal subunits. The polypeptide is Ribosome maturation factor RimP (Endomicrobium trichonymphae).